Consider the following 254-residue polypeptide: Very-long-chain (3R)-3-hydroxyacyl-CoA dehydratase 2 (254 aa).

A compositionally biased stretch (low complexity) spans 1–10 (MAAAAATAAT). Positions 1–34 (MAAAAATAATKGNGGGSGRVGAGDSSGARKKKGP) are disordered. An N-acetylalanine modification is found at Ala-2. Topologically, residues 2–41 (AAAAATAATKGNGGGSGRVGAGDSSGARKKKGPGPVATAY) are cytoplasmic. Residues 12–21 (GNGGGSGRVG) are compositionally biased toward gly residues. Residues 42–60 (LVIYNVVMTAGWLVIAVGL) traverse the membrane as a helical segment. At 61-79 (VRAYLAKGSYHSLYYSIER) the chain is on the lumenal side. A helical transmembrane segment spans residues 80–97 (PLKFFQTGALLEILHCAI). Topologically, residues 98-107 (GIVPSSVVLT) are cytoplasmic. A helical membrane pass occupies residues 108 to 125 (SFQVMSRVFLIWAVTHSV). Residues 126 to 130 (KEVQS) are Lumenal-facing. Residues 131 to 146 (EDSVLLFVIAWTITEI) form a helical membrane-spanning segment. The Cytoplasmic segment spans residues 147 to 169 (IRYSFYTFSLLNHLPYIIKWARY). The chain crosses the membrane as a helical span at residues 170–187 (TLFIVLYPMGVTGELLTI). Active-site residues include Tyr-176 and Glu-183. Topologically, residues 188-217 (YAALPFVRQAGLYSISLPNKYNFSFDYHAF) are lumenal. Positions 198 to 214 (GLYSISLPNKYNFSFDY) are may be involved in interaction with TECR. Asn-209 carries an N-linked (GlcNAc...) asparagine glycan. A helical transmembrane segment spans residues 218-235 (LILIMISYIPLFPQLYFH). Residues 236-254 (MIHQRRKVLSHTEEHKKFE) are Cytoplasmic-facing.

It belongs to the very long-chain fatty acids dehydratase HACD family. As to quaternary structure, may interact with enzymes of the ELO family (including ELOVL1); with those enzymes that mediate condensation, the first of the four steps of the reaction cycle responsible for fatty acids elongation, may be part of a larger fatty acids elongase complex. Interacts with BCAP31. Interacts with TECR.

It is found in the endoplasmic reticulum membrane. It carries out the reaction a very-long-chain (3R)-3-hydroxyacyl-CoA = a very-long-chain (2E)-enoyl-CoA + H2O. The catalysed reaction is (3R)-hydroxyhexadecanoyl-CoA = (2E)-hexadecenoyl-CoA + H2O. The enzyme catalyses (3R)-hydroxyoctadecanoyl-CoA = (2E)-octadecenoyl-CoA + H2O. It catalyses the reaction (3R)-hydroxyeicosanoyl-CoA = (2E)-eicosenoyl-CoA + H2O. It carries out the reaction (3R)-hydroxydocosanoyl-CoA = (2E)-docosenoyl-CoA + H2O. The catalysed reaction is (3R)-hydroxytetracosanoyl-CoA = (2E)-tetracosenoyl-CoA + H2O. The enzyme catalyses (3R)-hydroxyhexacosanoyl-CoA = (2E)-hexacosenoyl-CoA + H2O. Its pathway is lipid metabolism; fatty acid biosynthesis. Functionally, catalyzes the third of the very long-chain fatty acids (VLCFA) elongation four-step cycle (condensation, reduction, dehydration, and reduction). This endoplasmic reticulum-elongation process is characterized by the addition of two carbons to the lipid chain through each cycle. This enzyme catalyzes the dehydration of the 3-hydroxyacyl-CoA intermediate into trans-2,3-enoyl-CoA, within each cycle of elongation. Therefore, it participates in the production of various VLCFAs involved in multiple biological processes as precursors of membrane lipids and lipid mediators. The chain is Very-long-chain (3R)-3-hydroxyacyl-CoA dehydratase 2 from Mus musculus (Mouse).